Consider the following 98-residue polypeptide: MAVERVSGGSSLIDVLDRVLDKGIVIDAWVRISLVGIDLITVEARVVVASIDTYLKYADAVGLTGLVSRPQLTEVVEEPVVVEAPATRRTARPSRRRI.

Belongs to the gas vesicle GvpA family. As to quaternary structure, the gas vesicle shell is 2 nm thick and consists of a single layer of this protein. It forms helical ribs nearly perpendicular to the long axis of the vesicle.

Its subcellular location is the gas vesicle shell. Its function is as follows. Gas vesicles are hollow, gas filled proteinaceous nanostructures found in some microorganisms. During planktonic growth they allow positioning of the organism at a favorable depth for light or nutrient acquisition. GvpA forms the protein shell. This chain is Gas vesicle protein A, found in Koribacter versatilis (strain Ellin345).